Reading from the N-terminus, the 435-residue chain is Glutamyl-tRNA reductase (435 aa).

Substrate-binding positions include 49 to 52 (TCNR), Ser-109, 114 to 116 (ETQ), and Gln-120. Cys-50 serves as the catalytic Nucleophile. 189–194 (GAGEMS) contributes to the NADP(+) binding site.

It belongs to the glutamyl-tRNA reductase family. Homodimer.

The enzyme catalyses (S)-4-amino-5-oxopentanoate + tRNA(Glu) + NADP(+) = L-glutamyl-tRNA(Glu) + NADPH + H(+). The protein operates within porphyrin-containing compound metabolism; protoporphyrin-IX biosynthesis; 5-aminolevulinate from L-glutamyl-tRNA(Glu): step 1/2. Its function is as follows. Catalyzes the NADPH-dependent reduction of glutamyl-tRNA(Glu) to glutamate 1-semialdehyde (GSA). In Listeria innocua serovar 6a (strain ATCC BAA-680 / CLIP 11262), this protein is Glutamyl-tRNA reductase.